The sequence spans 186 residues: ATP synthase subunit delta (186 aa).

Belongs to the ATPase delta chain family. In terms of assembly, F-type ATPases have 2 components, F(1) - the catalytic core - and F(0) - the membrane proton channel. F(1) has five subunits: alpha(3), beta(3), gamma(1), delta(1), epsilon(1). F(0) has three main subunits: a(1), b(2) and c(10-14). The alpha and beta chains form an alternating ring which encloses part of the gamma chain. F(1) is attached to F(0) by a central stalk formed by the gamma and epsilon chains, while a peripheral stalk is formed by the delta and b chains.

It is found in the cell membrane. F(1)F(0) ATP synthase produces ATP from ADP in the presence of a proton or sodium gradient. F-type ATPases consist of two structural domains, F(1) containing the extramembraneous catalytic core and F(0) containing the membrane proton channel, linked together by a central stalk and a peripheral stalk. During catalysis, ATP synthesis in the catalytic domain of F(1) is coupled via a rotary mechanism of the central stalk subunits to proton translocation. Its function is as follows. This protein is part of the stalk that links CF(0) to CF(1). It either transmits conformational changes from CF(0) to CF(1) or is implicated in proton conduction. This is ATP synthase subunit delta from Mycoplasmopsis agalactiae (strain NCTC 10123 / CIP 59.7 / PG2) (Mycoplasma agalactiae).